We begin with the raw amino-acid sequence, 1057 residues long: Carbamoyl phosphate synthase large chain (1057 aa).

Positions 1–401 (MPKRNDIKTI…SLLKAIRSLE (401 aa)) are carboxyphosphate synthetic domain. 12 residues coordinate ATP: R129, R169, G175, G176, K208, I210, E215, G241, I242, H243, Q284, and E298. Residues 133–327 (RTLMNDLNVP…IAKLAAKIAV (195 aa)) enclose the ATP-grasp 1 domain. Residues Q284, E298, and N300 each contribute to the Mg(2+) site. Mn(2+) contacts are provided by Q284, E298, and N300. The segment at 402 to 546 (YGVHHLGLPN…YGTYETENES (145 aa)) is oligomerization domain. Residues 547–929 (IVTDKEKILV…ALFKGLTGSG (383 aa)) form a carbamoyl phosphate synthetic domain region. The 191-residue stretch at 671–861 (EALLRKINVP…MAQLAMRAII (191 aa)) folds into the ATP-grasp 2 domain. ATP contacts are provided by R707, R746, L748, E752, G777, V778, H779, S780, Q820, and E832. 3 residues coordinate Mg(2+): Q820, E832, and N834. Mn(2+) is bound by residues Q820, E832, and N834. Positions 930-1057 (VEVKDHGTVL…ESMTFTMRQM (128 aa)) constitute an MGS-like domain. The tract at residues 930-1057 (VEVKDHGTVL…ESMTFTMRQM (128 aa)) is allosteric domain.

The protein belongs to the CarB family. As to quaternary structure, composed of two chains; the small (or glutamine) chain promotes the hydrolysis of glutamine to ammonia, which is used by the large (or ammonia) chain to synthesize carbamoyl phosphate. Tetramer of heterodimers (alpha,beta)4. Mg(2+) serves as cofactor. Mn(2+) is required as a cofactor.

The enzyme catalyses hydrogencarbonate + L-glutamine + 2 ATP + H2O = carbamoyl phosphate + L-glutamate + 2 ADP + phosphate + 2 H(+). It catalyses the reaction hydrogencarbonate + NH4(+) + 2 ATP = carbamoyl phosphate + 2 ADP + phosphate + 2 H(+). It functions in the pathway amino-acid biosynthesis; L-arginine biosynthesis; carbamoyl phosphate from bicarbonate: step 1/1. The protein operates within pyrimidine metabolism; UMP biosynthesis via de novo pathway; (S)-dihydroorotate from bicarbonate: step 1/3. In terms of biological role, large subunit of the glutamine-dependent carbamoyl phosphate synthetase (CPSase). CPSase catalyzes the formation of carbamoyl phosphate from the ammonia moiety of glutamine, carbonate, and phosphate donated by ATP, constituting the first step of 2 biosynthetic pathways, one leading to arginine and/or urea and the other to pyrimidine nucleotides. The large subunit (synthetase) binds the substrates ammonia (free or transferred from glutamine from the small subunit), hydrogencarbonate and ATP and carries out an ATP-coupled ligase reaction, activating hydrogencarbonate by forming carboxy phosphate which reacts with ammonia to form carbamoyl phosphate. This chain is Carbamoyl phosphate synthase large chain, found in Staphylococcus aureus (strain Mu3 / ATCC 700698).